Here is a 707-residue protein sequence, read N- to C-terminus: DNA-binding protein RFX2 (707 aa).

S33 bears the Phosphoserine mark. The segment at residues H204–P279 is a DNA-binding region (RFX-type winged-helix). The segment at Q297–Q337 is disordered. The span at L315–Q337 shows a compositional bias: low complexity. S420 is subject to Phosphoserine.

It belongs to the RFX family. Homodimer; probably only forms homodimers in testis. Heterodimer; heterodimerizes with RFX1 and RFX3.

It is found in the nucleus. Its subcellular location is the cytoplasm. Its function is as follows. Transcription factor that acts as a key regulator of spermatogenesis. Acts by regulating expression of genes required for the haploid phase during spermiogenesis, such as genes required for cilium assembly and function. Recognizes and binds the X-box, a regulatory motif with DNA sequence 5'-GTNRCC(0-3N)RGYAAC-3' present on promoters. Probably activates transcription of the testis-specific histone gene H1-6. This is DNA-binding protein RFX2 (RFX2) from Bos taurus (Bovine).